A 373-amino-acid chain; its full sequence is Spermidine/putrescine import ATP-binding protein PotA (373 aa).

One can recognise an ABC transporter domain in the interval leucine 6 to valine 236. Residue glycine 38–threonine 45 participates in ATP binding.

It belongs to the ABC transporter superfamily. Spermidine/putrescine importer (TC 3.A.1.11.1) family. In terms of assembly, the complex is composed of two ATP-binding proteins (PotA), two transmembrane proteins (PotB and PotC) and a solute-binding protein (PotD).

The protein localises to the cell inner membrane. It catalyses the reaction ATP + H2O + polyamine-[polyamine-binding protein]Side 1 = ADP + phosphate + polyamineSide 2 + [polyamine-binding protein]Side 1.. In terms of biological role, part of the ABC transporter complex PotABCD involved in spermidine/putrescine import. Responsible for energy coupling to the transport system. The sequence is that of Spermidine/putrescine import ATP-binding protein PotA from Marinobacter nauticus (strain ATCC 700491 / DSM 11845 / VT8) (Marinobacter aquaeolei).